We begin with the raw amino-acid sequence, 393 residues long: uncharacterized protein (393 aa).

The 140-residue stretch at 250 to 389 (AVIVYDTMYN…KCYEFGKRLA (140 aa)) folds into the Flavodoxin-like domain.

This is an uncharacterized protein from Methanocaldococcus jannaschii (strain ATCC 43067 / DSM 2661 / JAL-1 / JCM 10045 / NBRC 100440) (Methanococcus jannaschii).